The following is a 341-amino-acid chain: Methionine import ATP-binding protein MetN 3 (341 aa).

One can recognise an ABC transporter domain in the interval 2–241; that stretch reads ILLENVKKIY…PQQDITKRFV (240 aa). 38-45 is an ATP binding site; sequence GYSGAGKS.

Belongs to the ABC transporter superfamily. Methionine importer (TC 3.A.1.24) family. As to quaternary structure, the complex is composed of two ATP-binding proteins (MetN), two transmembrane proteins (MetI) and a solute-binding protein (MetQ).

The protein localises to the cell membrane. The catalysed reaction is L-methionine(out) + ATP + H2O = L-methionine(in) + ADP + phosphate + H(+). It catalyses the reaction D-methionine(out) + ATP + H2O = D-methionine(in) + ADP + phosphate + H(+). Functionally, part of the ABC transporter complex MetNIQ involved in methionine import. Responsible for energy coupling to the transport system. The sequence is that of Methionine import ATP-binding protein MetN 3 from Bacillus anthracis.